The following is a 143-amino-acid chain: Myosin 1 light chain cam2 (143 aa).

EF-hand domains lie at 6–41 (EQTD…LGIN), 75–110 (ESEE…LGEK), and 111–143 (LSDN…IMAK).

This sequence belongs to the calmodulin family. As to quaternary structure, interacts with myo1 and pik1.

It localises to the cytoplasm. The protein resides in the prospore membrane. Its function is as follows. Plays a role in meiosis and sporulation. The chain is Myosin 1 light chain cam2 from Schizosaccharomyces pombe (strain 972 / ATCC 24843) (Fission yeast).